Consider the following 541-residue polypeptide: Protein MGF 505-10R (541 aa).

The protein belongs to the asfivirus MGF 505 family.

Functionally, plays a role in virus cell tropism, and may be required for efficient virus replication in macrophages. This Ornithodoros (relapsing fever ticks) protein is Protein MGF 505-10R.